A 272-amino-acid chain; its full sequence is Bifunctional protein FolD 2 (272 aa).

Residues 157–159, Thr-182, and Ile-223 each bind NADP(+); that span reads GRS.

Belongs to the tetrahydrofolate dehydrogenase/cyclohydrolase family. As to quaternary structure, homodimer.

It carries out the reaction (6R)-5,10-methylene-5,6,7,8-tetrahydrofolate + NADP(+) = (6R)-5,10-methenyltetrahydrofolate + NADPH. It catalyses the reaction (6R)-5,10-methenyltetrahydrofolate + H2O = (6R)-10-formyltetrahydrofolate + H(+). It participates in one-carbon metabolism; tetrahydrofolate interconversion. Functionally, catalyzes the oxidation of 5,10-methylenetetrahydrofolate to 5,10-methenyltetrahydrofolate and then the hydrolysis of 5,10-methenyltetrahydrofolate to 10-formyltetrahydrofolate. The polypeptide is Bifunctional protein FolD 2 (Syntrophomonas wolfei subsp. wolfei (strain DSM 2245B / Goettingen)).